The following is a 989-amino-acid chain: Phosphoenolpyruvate carboxylase (989 aa).

Residues histidine 175 and lysine 630 contribute to the active site.

This sequence belongs to the PEPCase type 1 family. The cofactor is Mg(2+).

The enzyme catalyses oxaloacetate + phosphate = phosphoenolpyruvate + hydrogencarbonate. Forms oxaloacetate, a four-carbon dicarboxylic acid source for the tricarboxylic acid cycle. The sequence is that of Phosphoenolpyruvate carboxylase from Prochlorococcus marinus (strain AS9601).